The sequence spans 2034 residues: Pecanex-like protein 3 (2034 aa).

Transmembrane regions (helical) follow at residues 33–53 (CFHL…YMVL) and 54–74 (PPSL…FATI). The tract at residues 96–118 (STMGELEEEPAQGDSNPPRDPGV) is disordered. S127 carries the post-translational modification Phosphoserine. T129 carries the phosphothreonine modification. 3 disordered regions span residues 193–242 (IGDL…PLLK), 260–517 (DRAL…LRPP), and 540–625 (VLPA…SHSR). The span at 294–303 (KAGSSDSCFS) shows a compositional bias: polar residues. Over residues 305–319 (TDRETLSSFKSEKTN) the composition is skewed to basic and acidic residues. N319 is a glycosylation site (N-linked (GlcNAc...) asparagine). A Phosphothreonine modification is found at T370. The segment covering 391 to 409 (PSKRQPPLRRHSPPGRAPR) has biased composition (basic residues). Residues S392 and S431 each carry the phosphoserine modification. Over residues 427 to 436 (GSELSPASSL) the composition is skewed to polar residues. Residues 444–460 (TDSSSSTSCYSPESSRG) are compositionally biased toward low complexity. The span at 488-497 (TQRTPSTASA) shows a compositional bias: polar residues. S505 carries the post-translational modification Phosphoserine. 7 helical membrane-spanning segments follow: residues 790–812 (VLEN…LLLL), 819–836 (IWVF…YSLL), 852–872 (WVIA…IWLL), 880–900 (PFPP…FFCA), 903–923 (VATV…LPQV), 946–968 (SPLT…YGFC), and 980–1000 (HVPV…YHLS). A Phosphoserine modification is found at S1025. The next 4 membrane-spanning stretches (helical) occupy residues 1053–1073 (LVMC…TVFI), 1078–1098 (VLGF…HYLL), 1244–1264 (FVLT…HAFA), and 1280–1300 (LLSG…VFIM). At S1697 the chain carries Phosphoserine. The N-linked (GlcNAc...) asparagine glycan is linked to N1770. The disordered stretch occupies residues 1844–2034 (GGLTSLSNNP…AAQPLLEHQY (191 aa)). Over residues 1890-1910 (RPPPLLQWPPPRLPGPPPASP) the composition is skewed to pro residues. S1909 is modified (phosphoserine). Low complexity predominate over residues 1925 to 1939 (GLLSSEGPSGKWSLG). Residue S1955 is modified to Phosphoserine. Residues 1969 to 1978 (LSLSLSLSLS) are compositionally biased toward low complexity.

Belongs to the pecanex family.

The protein resides in the membrane. This Homo sapiens (Human) protein is Pecanex-like protein 3.